Consider the following 494-residue polypeptide: Cytochrome P450 2A5 (494 aa).

Ser-131 is subject to Phosphoserine. An N6-acetyllysine modification is found at Lys-379. Residue Cys-439 coordinates heme.

This sequence belongs to the cytochrome P450 family. It depends on heme as a cofactor. Liver, with a strong circadian rhythmicity. Circadian expression is regulated by DBP.

The protein localises to the endoplasmic reticulum membrane. The protein resides in the microsome membrane. The catalysed reaction is an organic molecule + reduced [NADPH--hemoprotein reductase] + O2 = an alcohol + oxidized [NADPH--hemoprotein reductase] + H2O + H(+). Exhibits a high coumarin 7-hydroxylase activity. The protein is Cytochrome P450 2A5 (Cyp2a5) of Mus musculus (Mouse).